Here is a 316-residue protein sequence, read N- to C-terminus: tRNA dimethylallyltransferase (316 aa).

17–24 (GPTASGKT) contacts ATP. 19–24 (TASGKT) contributes to the substrate binding site. Interaction with substrate tRNA stretches follow at residues 42-45 (DSAL), 166-170 (QRLSR), 247-252 (RCVGYR), and 280-287 (KRQITWLR).

The protein belongs to the IPP transferase family. In terms of assembly, monomer. Mg(2+) serves as cofactor.

The catalysed reaction is adenosine(37) in tRNA + dimethylallyl diphosphate = N(6)-dimethylallyladenosine(37) in tRNA + diphosphate. In terms of biological role, catalyzes the transfer of a dimethylallyl group onto the adenine at position 37 in tRNAs that read codons beginning with uridine, leading to the formation of N6-(dimethylallyl)adenosine (i(6)A). This Escherichia coli O45:K1 (strain S88 / ExPEC) protein is tRNA dimethylallyltransferase.